The primary structure comprises 401 residues: Riboflavin biosynthesis protein RibBA (401 aa).

The tract at residues 1–203 (MTDFQFSKVE…IQQLQEYRRK (203 aa)) is DHBP synthase. Residues 30 to 31 (RE), D35, 142 to 146 (RNGHT), and E166 each bind D-ribulose 5-phosphate. Residue E31 participates in Mg(2+) binding. Residue H145 participates in Mg(2+) binding. Residues 204–401 (HDSLVKQISV…QIKMGHMFNF (198 aa)) form a GTP cyclohydrolase II region. 254–258 (RIHSE) contributes to the GTP binding site. Residues C259, C270, and C272 each coordinate Zn(2+). GTP contacts are provided by residues Q275, 297 to 299 (EGR), and T319. Catalysis depends on D331, which acts as the Proton acceptor; for GTP cyclohydrolase activity. Residue R333 is the Nucleophile; for GTP cyclohydrolase activity of the active site. 2 residues coordinate GTP: T354 and K359.

It in the N-terminal section; belongs to the DHBP synthase family. The protein in the C-terminal section; belongs to the GTP cyclohydrolase II family. The cofactor is Mg(2+). Mn(2+) is required as a cofactor. Zn(2+) serves as cofactor.

It carries out the reaction D-ribulose 5-phosphate = (2S)-2-hydroxy-3-oxobutyl phosphate + formate + H(+). The catalysed reaction is GTP + 4 H2O = 2,5-diamino-6-hydroxy-4-(5-phosphoribosylamino)-pyrimidine + formate + 2 phosphate + 3 H(+). Its pathway is cofactor biosynthesis; riboflavin biosynthesis; 2-hydroxy-3-oxobutyl phosphate from D-ribulose 5-phosphate: step 1/1. It functions in the pathway cofactor biosynthesis; riboflavin biosynthesis; 5-amino-6-(D-ribitylamino)uracil from GTP: step 1/4. Catalyzes the conversion of D-ribulose 5-phosphate to formate and 3,4-dihydroxy-2-butanone 4-phosphate. Its function is as follows. Catalyzes the conversion of GTP to 2,5-diamino-6-ribosylamino-4(3H)-pyrimidinone 5'-phosphate (DARP), formate and pyrophosphate. The protein is Riboflavin biosynthesis protein RibBA of Actinobacillus pleuropneumoniae serotype 7 (strain AP76).